The following is a 514-amino-acid chain: Cytochrome P450 71AP13 (514 aa).

Residues 20–37 (HSSLFAFSLLILLLKFIY) form a helical membrane-spanning segment. Asn127 and Asn184 each carry an N-linked (GlcNAc...) asparagine glycan. A heme-binding site is contributed by Cys455.

Belongs to the cytochrome P450 family. It depends on heme as a cofactor. Expressed in fruit kernel, seedlings, leaves and stems.

Its subcellular location is the membrane. This is Cytochrome P450 71AP13 from Prunus mume (Japanese apricot).